A 517-amino-acid polypeptide reads, in one-letter code: Acetyl-coenzyme A carboxylase carboxyl transferase subunit beta, chloroplastic (517 aa).

4 stretches are compositionally biased toward basic and acidic residues: residues 1 to 17, 24 to 41, 48 to 65, and 72 to 81; these read MKPTKPEGPKKPNKSNE, GDNKEDLEGPKKPNKSNE, and GDKQKDKKDG. 2 disordered regions span residues 1–179 and 204–234; these read MKPT…KEEE and KHRDRKSVPAKERELVPAQSTKRDTDPDSEA. Residues 87 to 131 show a composition bias toward acidic residues; that stretch reads YDDEYEEDLEYDDEYEEDLEYDDEYEEDLEYDDEEYDDEYEEDLE. Basic and acidic residues-rich tracts occupy residues 132–179 and 209–229; these read GDNK…KEEE and KSVPAKERELVPAQSTKRDTD. In terms of domain architecture, CoA carboxyltransferase N-terminal spans 243–514; that stretch reads LWVHCKLCSG…NSQVINIYNY (272 aa). Zn(2+)-binding residues include Cys247, Cys250, Cys266, and Cys269. Residues 247-269 form a C4-type zinc finger; the sequence is CKLCSGFNYKKILKSKNNVCEQC.

This sequence belongs to the AccD/PCCB family. In terms of assembly, acetyl-CoA carboxylase is a heterohexamer composed of biotin carboxyl carrier protein, biotin carboxylase and 2 subunits each of ACCase subunit alpha and ACCase plastid-coded subunit beta (accD). The cofactor is Zn(2+).

The protein localises to the plastid. It is found in the chloroplast stroma. It catalyses the reaction N(6)-carboxybiotinyl-L-lysyl-[protein] + acetyl-CoA = N(6)-biotinyl-L-lysyl-[protein] + malonyl-CoA. The protein operates within lipid metabolism; malonyl-CoA biosynthesis; malonyl-CoA from acetyl-CoA: step 1/1. In terms of biological role, component of the acetyl coenzyme A carboxylase (ACC) complex. Biotin carboxylase (BC) catalyzes the carboxylation of biotin on its carrier protein (BCCP) and then the CO(2) group is transferred by the transcarboxylase to acetyl-CoA to form malonyl-CoA. This chain is Acetyl-coenzyme A carboxylase carboxyl transferase subunit beta, chloroplastic, found in Oenothera elata subsp. hookeri (Hooker's evening primrose).